Reading from the N-terminus, the 322-residue chain is Thiamine thiazole synthase (322 aa).

Residues cysteine 84, 105 to 106 (EA), glycine 113, and valine 178 each bind substrate. Residue cysteine 211 is modified to 2,3-didehydroalanine (Cys). Substrate-binding positions include aspartate 213, histidine 228, methionine 280, and 290 to 292 (RMG).

This sequence belongs to the THI4 family. As to quaternary structure, homooctamer. Requires Fe cation as cofactor. During the catalytic reaction, a sulfide is transferred from Cys-211 to a reaction intermediate, generating a dehydroalanine residue.

Its subcellular location is the cytoplasm. It localises to the nucleus. The catalysed reaction is [ADP-thiazole synthase]-L-cysteine + glycine + NAD(+) = [ADP-thiazole synthase]-dehydroalanine + ADP-5-ethyl-4-methylthiazole-2-carboxylate + nicotinamide + 3 H2O + 2 H(+). Its function is as follows. Involved in biosynthesis of the thiamine precursor thiazole. Catalyzes the conversion of NAD and glycine to adenosine diphosphate 5-(2-hydroxyethyl)-4-methylthiazole-2-carboxylic acid (ADT), an adenylated thiazole intermediate. The reaction includes an iron-dependent sulfide transfer from a conserved cysteine residue of the protein to a thiazole intermediate. The enzyme can only undergo a single turnover, which suggests it is a suicide enzyme. May have additional roles in adaptation to various stress conditions and in DNA damage tolerance. This Fusarium vanettenii (strain ATCC MYA-4622 / CBS 123669 / FGSC 9596 / NRRL 45880 / 77-13-4) (Fusarium solani subsp. pisi) protein is Thiamine thiazole synthase.